A 484-amino-acid polypeptide reads, in one-letter code: Threonine synthase-like 2 (484 aa).

At K113 the chain carries N6-(pyridoxal phosphate)lysine.

This sequence belongs to the threonine synthase family. Pyridoxal 5'-phosphate is required as a cofactor.

Functionally, acts as a catabolic phospho-lyase on both gamma- and beta-phosphorylated substrates. Degrades O-phospho-threonine (PThr) to alpha-ketobutyrate, ammonia and phosphate. This is Threonine synthase-like 2 (THNSL2) from Pongo abelii (Sumatran orangutan).